Consider the following 324-residue polypeptide: tRNA dimethylallyltransferase (324 aa).

ATP is bound at residue 17 to 24 (GPTASGKT). 19–24 (TASGKT) is a binding site for substrate. Interaction with substrate tRNA regions lie at residues 42 to 45 (DSAL), 166 to 170 (QRIQR), 251 to 256 (RCVGYR), and 284 to 291 (KRQITWLR).

It belongs to the IPP transferase family. In terms of assembly, monomer. Mg(2+) is required as a cofactor.

The enzyme catalyses adenosine(37) in tRNA + dimethylallyl diphosphate = N(6)-dimethylallyladenosine(37) in tRNA + diphosphate. Functionally, catalyzes the transfer of a dimethylallyl group onto the adenine at position 37 in tRNAs that read codons beginning with uridine, leading to the formation of N6-(dimethylallyl)adenosine (i(6)A). This chain is tRNA dimethylallyltransferase, found in Burkholderia orbicola (strain AU 1054).